The primary structure comprises 311 residues: Pyrimidine-specific ribonucleoside hydrolase RihA (311 aa).

Residue H240 is part of the active site.

The protein belongs to the IUNH family. RihA subfamily.

Hydrolyzes with equal efficiency cytidine or uridine to ribose and cytosine or uracil, respectively. This chain is Pyrimidine-specific ribonucleoside hydrolase RihA, found in Escherichia coli O139:H28 (strain E24377A / ETEC).